Consider the following 163-residue polypeptide: Small ribosomal subunit protein bS18c (163 aa).

Disordered regions lie at residues 1–52 (MYIS…IGPG) and 144–163 (NLRNSNQNLRNNNRNLSSDC). The span at 7 to 48 (PFRKSKQPFRKSKQTFHKSKQPFRKFKQPFRKSKQPFRRRSR) shows a compositional bias: basic residues.

The protein belongs to the bacterial ribosomal protein bS18 family. As to quaternary structure, part of the 30S ribosomal subunit.

Its subcellular location is the plastid. It localises to the chloroplast. The sequence is that of Small ribosomal subunit protein bS18c from Sorghum bicolor (Sorghum).